Consider the following 258-residue polypeptide: Na(+)-translocating NADH-quinone reductase subunit C (258 aa).

A helical membrane pass occupies residues L14–G34. The residue at position 226 (S226) is an FMN phosphoryl serine.

The protein belongs to the NqrC family. Composed of six subunits; NqrA, NqrB, NqrC, NqrD, NqrE and NqrF. It depends on FMN as a cofactor.

Its subcellular location is the cell inner membrane. It catalyses the reaction a ubiquinone + n Na(+)(in) + NADH + H(+) = a ubiquinol + n Na(+)(out) + NAD(+). Functionally, NQR complex catalyzes the reduction of ubiquinone-1 to ubiquinol by two successive reactions, coupled with the transport of Na(+) ions from the cytoplasm to the periplasm. NqrA to NqrE are probably involved in the second step, the conversion of ubisemiquinone to ubiquinol. In Neisseria meningitidis serogroup A / serotype 4A (strain DSM 15465 / Z2491), this protein is Na(+)-translocating NADH-quinone reductase subunit C.